The sequence spans 349 residues: Transmembrane protein 255A (349 aa).

4 helical membrane passes run 30-50 (IYVT…GLAA), 57-77 (VTVG…LGII), 89-109 (LVAS…CAIV), and 226-246 (TILN…LGGF). The segment at 301-329 (VFPSSPPSGLSDEPQSASPSPSYMWSSSA) is disordered. Residues 316-329 (SASPSPSYMWSSSA) are compositionally biased toward low complexity.

This sequence belongs to the TMEM255 family.

The protein localises to the membrane. This chain is Transmembrane protein 255A (TMEM255A), found in Macaca fascicularis (Crab-eating macaque).